Consider the following 614-residue polypeptide: Asparagine synthetase [glutamine-hydrolyzing] 3 (614 aa).

Residue C2 is the For GATase activity of the active site. The Glutamine amidotransferase type-2 domain occupies 2-216; the sequence is CGITGWVDFK…PAHALTFSKD (215 aa). Residues 50–54, 77–79, and D102 contribute to the L-glutamine site; these read RLAVV and NGE. 377 to 378 is a binding site for ATP; sequence SG.

This sequence belongs to the asparagine synthetase family.

The enzyme catalyses L-aspartate + L-glutamine + ATP + H2O = L-asparagine + L-glutamate + AMP + diphosphate + H(+). Its pathway is amino-acid biosynthesis; L-asparagine biosynthesis; L-asparagine from L-aspartate (L-Gln route): step 1/1. Asparagine synthetase involved in sporulation. This chain is Asparagine synthetase [glutamine-hydrolyzing] 3 (asnO), found in Bacillus subtilis (strain 168).